Consider the following 612-residue polypeptide: Cytokine-like nuclear factor N-PAC (612 aa).

In terms of domain architecture, PWWP spans 22–81 (PKDLIWAKMKGFTPWPGMIVEPPLDLLTQQRRANTKCVFFFGSRNFAWIEENNIKPFEGP). Residues 168–270 (AVEGENNADS…GASSSSPTAR (103 aa)) form a disordered region. 2 stretches are compositionally biased toward low complexity: residues 177–193 (SSASPTVTAATPATAKS) and 201–220 (AKPVSAVSATKAAKASTTKS). Residues 228–240 (AHQTPTGANTSGL) are compositionally biased toward polar residues. The interval 276–279 (DDLL) is interaction with histone H3. Positions 319–612 (RDIVPSELTF…SSAVFVRSRF (294 aa)) are dehydrogenase domain. NAD(+) contacts are provided by residues 329–343 (GFLGLGMMGSTIVKD), T421, and R564.

It belongs to the HIBADH-related family. NP60 subfamily. Binds to mononucleosomes. Interacts with male-specific lethal (MSL) histone acetyltransferase complex at least composed of mof, msl-1, msl-2 and msl-3.

It localises to the chromosome. In terms of biological role, nucleosome-destabilizing factor that is recruited to genes during transcriptional activation and colocalizes with a subset of trimethylated 'Lys-36' histone H3 (H3K36me3)-enriched regions. Binds DNA (in vitro). Facilitates Pol II transcription through nucleosomes. Facilitates male-specific lethal (MSL) histone acetyltransferase complex targeting to active genes on the X chromosome. Stimulates the acetylation of 'Lys-56' of nucleosomal histone H3 (H3K56ac) by nej. In Drosophila pseudoobscura pseudoobscura (Fruit fly), this protein is Cytokine-like nuclear factor N-PAC.